Consider the following 191-residue polypeptide: INO80 complex subunit C (191 aa).

A disordered region spans residues 1-41 (MAAQIPIVAATSTPAVARNSKKRPASPSHNSSGGGYGASKK).

As to quaternary structure, component of the chromatin remodeling INO80 complex; specifically part of a complex module associated with the helicase ATP-binding and the helicase C-terminal domain of INO80. Component of some MLL1/MLL complex, at least composed of the core components KMT2A/MLL1, ASH2L, HCFC1/HCF1, WDR5 and RBBP5, as well as the facultative components BACC1, CHD8, E2F6, HSP70, INO80C, KANSL1, LAS1L, MAX, MCRS1, MGA, MYST1/MOF, PELP1, PHF20, PRP31, RING2, RUVB1/TIP49A, RUVB2/TIP49B, SENP3, TAF1, TAF4, TAF6, TAF7, TAF9 and TEX10.

Its subcellular location is the nucleus. Functionally, proposed core component of the chromatin remodeling INO80 complex which is involved in transcriptional regulation, DNA replication and probably DNA repair. In Mus musculus (Mouse), this protein is INO80 complex subunit C (Ino80c).